We begin with the raw amino-acid sequence, 485 residues long: MSLFDHSVSELHKKLNNKEISVTDLVEESYKRIADVEDNVKAFLTLDEENARAKAKELDAKIGAEDNGLLFGMPIGVKDNIVTNGLRTTCASKMLANFDPIYDATVVQKLKAADTITIGKLNMDEFAMGSSNENSGFYATKNPWNLDYVPGGSSGGSAAAVAAGEVLFSLGSDTGGSIRQPAAYCGVVGLKPTYGRVSRYGLVAFASSLDQIGPITRTVEDNAYLLQAISGIDRMDATSANVEVGNYLAGLTGDVKGLRIAVPKEYLGEGVGEEARESVLAALKVLEGMGATWEEVSLPHSKYALATYYLLSSSEASANLSRFDGVRYGVRSDNVNNLLDLYKNTRSEGFGDEVKRRIMLGTFALSSGYYDAYYKKAQQVRTLIKNDFENVFANYDVIIGPTTPTPAFKVGEKVDDPMTMYANDILTIPVNLAGVPAISVPCGFGANNMPLGLQIIGKHFDEATIYRVAHAFEQATDYHTKKASL.

Residues Lys-78 and Ser-153 each act as charge relay system in the active site. The active-site Acyl-ester intermediate is Ser-177.

The protein belongs to the amidase family. GatA subfamily. Heterotrimer of A, B and C subunits.

The enzyme catalyses L-glutamyl-tRNA(Gln) + L-glutamine + ATP + H2O = L-glutaminyl-tRNA(Gln) + L-glutamate + ADP + phosphate + H(+). Allows the formation of correctly charged Gln-tRNA(Gln) through the transamidation of misacylated Glu-tRNA(Gln) in organisms which lack glutaminyl-tRNA synthetase. The reaction takes place in the presence of glutamine and ATP through an activated gamma-phospho-Glu-tRNA(Gln). The polypeptide is Glutamyl-tRNA(Gln) amidotransferase subunit A (Bacillus cereus (strain G9842)).